Here is a 1792-residue protein sequence, read N- to C-terminus: uncharacterized protein (1792 aa).

A compositionally biased stretch (low complexity) spans 1-28 (MNNNNNNNNNSNNNNNSNNNNNGNSNNN). Disordered regions lie at residues 1–34 (MNNN…SGKG), 162–187 (TNIS…SHHH), 440–461 (KKRK…NKSS), 544–568 (VIDD…SIIN), 736–777 (NKNK…INSN), 837–979 (TKGK…NDLK), 1044–1071 (VSKS…KEQS), 1084–1106 (NMNN…NDNK), 1160–1215 (TSSG…VLER), 1257–1290 (NITA…NNNG), 1651–1686 (LRSK…GRKK), 1704–1731 (PRKK…NSEK), and 1742–1761 (IENK…NLNN). Positions 169-182 (KQPISSNQHPYQQK) are enriched in polar residues. The span at 550–559 (KRNKKEKKKT) shows a compositional bias: basic residues. Residues 741–776 (PNNINSNDNNNKNDDNNNNNNKNVDGNNNNNNNINS) show a composition bias toward low complexity. Over residues 838-847 (KGKKKGRKKK) the composition is skewed to basic residues. Basic and acidic residues predominate over residues 856–873 (NIKEDIKSSKKDKKKDNI). Residues 874-924 (NDNNNDNNNDNNNDNNNDNNNDNNNDNNNDNNNNNNNNNNNNNNNNNNNHN) are compositionally biased toward low complexity. Over residues 943–954 (KKKTRQYRKKSK) the composition is skewed to basic residues. Residues 955–966 (ITNDDNNEKIKQ) show a composition bias toward basic and acidic residues. The span at 1045-1057 (SKSNIPSSFSSPP) shows a compositional bias: low complexity. Composition is skewed to basic and acidic residues over residues 1060–1071 (TNNKNDIDKEQS), 1088–1106 (EKSK…NDNK), and 1166–1192 (NKEE…KNVD). Residues 1205–1215 (RKKRKKDVLER) show a composition bias toward basic residues. Positions 1261-1289 (NNNNDNNKNNDNDNNNNNNDNIINNNNNN) are enriched in low complexity. Basic residues-rich tracts occupy residues 1660 to 1686 (KEHK…GRKK) and 1704 to 1717 (PRKK…RKSK).

This is an uncharacterized protein from Plasmodium falciparum (isolate 3D7).